Reading from the N-terminus, the 415-residue chain is Histidine--tRNA ligase (415 aa).

Belongs to the class-II aminoacyl-tRNA synthetase family. Homodimer.

It is found in the cytoplasm. The enzyme catalyses tRNA(His) + L-histidine + ATP = L-histidyl-tRNA(His) + AMP + diphosphate + H(+). This Idiomarina loihiensis (strain ATCC BAA-735 / DSM 15497 / L2-TR) protein is Histidine--tRNA ligase.